Reading from the N-terminus, the 111-residue chain is Colicin-Ia immunity protein (111 aa).

A run of 2 helical transmembrane segments spans residues 33-53 (LLFWCISLCGMVLYPVAKWYI) and 85-105 (TGTVFILSLPLSMIYILSVII).

It is found in the cell membrane. In terms of biological role, this protein is able to protect a cell, which harbors the plasmid ColIa-CA53 encoding colicin Ia, against colicin Ia. In Escherichia coli, this protein is Colicin-Ia immunity protein.